Consider the following 619-residue polypeptide: Pentatricopeptide repeat-containing protein At1g68980, mitochondrial (619 aa).

The transit peptide at 1 to 100 (MLRKTLTLIS…RAFVSTTYVI (100 aa)) directs the protein to the mitochondrion. PPR repeat units follow at residues 186–221 (DLVA…GVKP), 222–256 (DELS…GFAS), 257–292 (RRIL…GEAS), 295–329 (SEET…ESMS), 366–400 (GIGV…GLQL), 401–435 (DVET…RVAD), 436–466 (LKRC…VMED), 472–506 (KSHD…QYEP), 507–541 (NNQT…KAKL), and 542–576 (EHAL…KIFV).

It belongs to the PPR family. P subfamily.

It localises to the mitochondrion. This chain is Pentatricopeptide repeat-containing protein At1g68980, mitochondrial, found in Arabidopsis thaliana (Mouse-ear cress).